The sequence spans 192 residues: Ribosomal RNA large subunit methyltransferase E (192 aa).

5 residues coordinate S-adenosyl-L-methionine: G46, W48, D63, D79, and D102. K142 functions as the Proton acceptor in the catalytic mechanism.

The protein belongs to the class I-like SAM-binding methyltransferase superfamily. RNA methyltransferase RlmE family.

Its subcellular location is the cytoplasm. The enzyme catalyses uridine(2552) in 23S rRNA + S-adenosyl-L-methionine = 2'-O-methyluridine(2552) in 23S rRNA + S-adenosyl-L-homocysteine + H(+). Specifically methylates the uridine in position 2552 of 23S rRNA at the 2'-O position of the ribose in the fully assembled 50S ribosomal subunit. This is Ribosomal RNA large subunit methyltransferase E from Wolbachia pipientis wMel.